The sequence spans 302 residues: tRNA-cytidine(32) 2-sulfurtransferase (302 aa).

The short motif at 45–50 is the PP-loop motif element; it reads SGGKDS. Residues cysteine 120, cysteine 123, and cysteine 211 each contribute to the [4Fe-4S] cluster site.

It belongs to the TtcA family. In terms of assembly, homodimer. Mg(2+) is required as a cofactor. It depends on [4Fe-4S] cluster as a cofactor.

It is found in the cytoplasm. The catalysed reaction is cytidine(32) in tRNA + S-sulfanyl-L-cysteinyl-[cysteine desulfurase] + AH2 + ATP = 2-thiocytidine(32) in tRNA + L-cysteinyl-[cysteine desulfurase] + A + AMP + diphosphate + H(+). The protein operates within tRNA modification. Its function is as follows. Catalyzes the ATP-dependent 2-thiolation of cytidine in position 32 of tRNA, to form 2-thiocytidine (s(2)C32). The sulfur atoms are provided by the cysteine/cysteine desulfurase (IscS) system. The chain is tRNA-cytidine(32) 2-sulfurtransferase from Aeromonas salmonicida (strain A449).